Reading from the N-terminus, the 359-residue chain is Peptide chain release factor 1 (359 aa).

Q235 carries the post-translational modification N5-methylglutamine. The tract at residues 283-309 (QKAESERSQARRSQVGSGDRSERIRTY) is disordered.

Belongs to the prokaryotic/mitochondrial release factor family. Post-translationally, methylated by PrmC. Methylation increases the termination efficiency of RF1.

Its subcellular location is the cytoplasm. Functionally, peptide chain release factor 1 directs the termination of translation in response to the peptide chain termination codons UAG and UAA. The protein is Peptide chain release factor 1 of Brucella suis (strain ATCC 23445 / NCTC 10510).